Consider the following 423-residue polypeptide: Serine hydroxymethyltransferase 2 (423 aa).

(6S)-5,6,7,8-tetrahydrofolate-binding positions include Leu121 and 125 to 127 (GHL). Position 230 is an N6-(pyridoxal phosphate)lysine (Lys230). 356-358 (SPF) serves as a coordination point for (6S)-5,6,7,8-tetrahydrofolate.

Belongs to the SHMT family. Homodimer. The cofactor is pyridoxal 5'-phosphate.

The protein resides in the cytoplasm. The enzyme catalyses (6R)-5,10-methylene-5,6,7,8-tetrahydrofolate + glycine + H2O = (6S)-5,6,7,8-tetrahydrofolate + L-serine. It functions in the pathway one-carbon metabolism; tetrahydrofolate interconversion. It participates in amino-acid biosynthesis; glycine biosynthesis; glycine from L-serine: step 1/1. Catalyzes the reversible interconversion of serine and glycine with tetrahydrofolate (THF) serving as the one-carbon carrier. This reaction serves as the major source of one-carbon groups required for the biosynthesis of purines, thymidylate, methionine, and other important biomolecules. Also exhibits THF-independent aldolase activity toward beta-hydroxyamino acids, producing glycine and aldehydes, via a retro-aldol mechanism. This Pectobacterium atrosepticum (strain SCRI 1043 / ATCC BAA-672) (Erwinia carotovora subsp. atroseptica) protein is Serine hydroxymethyltransferase 2.